A 149-amino-acid chain; its full sequence is Protein SprT-like (149 aa).

The SprT-like domain maps to 6 to 147 (LQALVEQISI…VCGRCRSKLK (142 aa)). A Zn(2+)-binding site is contributed by His67. Glu68 is an active-site residue. His71 is a binding site for Zn(2+).

This sequence belongs to the SprT family. It depends on Zn(2+) as a cofactor.

The protein localises to the cytoplasm. This Geobacillus kaustophilus (strain HTA426) protein is Protein SprT-like.